We begin with the raw amino-acid sequence, 440 residues long: Guanine/hypoxanthine permease PbuG (440 aa).

Helical transmembrane passes span 18 to 38 (IIGGLTTFLSMAYILFVNPIT), 57 to 77 (AVFTATALASAAGCILMGLIA), 81 to 101 (IAIAPGMGLNAFFAFSVVLGM), 107 to 127 (AALSGVFISGLIFVALSLTGF), 142 to 162 (AVGAGIGLFITFVGLQGSGII), 175 to 195 (IHSGPVLLTIFGVIVTVILMV), 201 to 221 (GVFIGMLLTAVAGMIFGLVPV), 251 to 271 (MLIVILTFLFVGFFDTAGTLV), 291 to 311 (ALLADSSSIVIGAVLGTSTTT), 327 to 347 (GFAAIVTGILFLLATFFSPLL), 354 to 374 (VTAPALIIVGALMVAPLGKIA), 388 to 408 (MIMMPLTYSIATGIAIGFIFY), and 419 to 439 (KEVHPIMYGLFVVFILYFIFL).

It belongs to the nucleobase:cation symporter-2 (NCS2) (TC 2.A.40) family. Azg-like subfamily.

It is found in the cell membrane. Involved in the uptake of the purine bases hypoxanthine and guanine. This Bacillus subtilis (strain 168) protein is Guanine/hypoxanthine permease PbuG (pbuG).